Reading from the N-terminus, the 1761-residue chain is Nonribosomal peptide synthetase 6 (1761 aa).

Positions 63-468 (ERAALHPEKI…GRQDQQVKLR (406 aa)) are adenylation. The Carrier 1 domain maps to 600-675 (EATTEMELKL…AMAEKAKPVS (76 aa)). S636 carries the post-translational modification O-(pantetheine 4'-phosphoryl)serine. The tract at residues 712 to 1135 (VEDVYPCTPL…AVLDPAEARD (424 aa)) is condensation 1. 2 consecutive Carrier domains span residues 1169–1242 (SPNE…SNER) and 1237–1313 (SASN…EEEM). S1203 and S1274 each carry O-(pantetheine 4'-phosphoryl)serine. A condensation 2 region spans residues 1354-1677 (IYPTRPLQQL…DKVQWFDTVV (324 aa)).

This sequence belongs to the NRP synthetase family.

It participates in siderophore biosynthesis. NRPS involved in extracellular coprogen-type siderophores biosynthesis including coprogen, neocoprogen I and neocoprogen II. The role of extracellular siderophores in fungal virulence to plants is to supply iron to the fungus during plant infection, but not to act as phytotoxins, depriving their hosts of iron. The chain is Nonribosomal peptide synthetase 6 from Cochliobolus miyabeanus (Brown spot disease fungus).